Reading from the N-terminus, the 247-residue chain is tRNA (guanine-N(7)-)-methyltransferase (247 aa).

S-adenosyl-L-methionine-binding positions include Gly-70, 93–94, 128–129, and Leu-148; these read EI and NA. Asp-151 is a catalytic residue. 226–228 lines the S-adenosyl-L-methionine pocket; that stretch reads SEE.

It belongs to the class I-like SAM-binding methyltransferase superfamily. TrmB family.

It is found in the nucleus. It carries out the reaction guanosine(46) in tRNA + S-adenosyl-L-methionine = N(7)-methylguanosine(46) in tRNA + S-adenosyl-L-homocysteine. The protein operates within tRNA modification; N(7)-methylguanine-tRNA biosynthesis. Its function is as follows. Catalyzes the formation of N(7)-methylguanine at position 46 (m7G46) in tRNA. This Drosophila pseudoobscura pseudoobscura (Fruit fly) protein is tRNA (guanine-N(7)-)-methyltransferase.